The chain runs to 249 residues: Enolase-phosphatase E1 (249 aa).

Residues D14 and E16 each contribute to the Mg(2+) site. Substrate-binding positions include 141 to 142 (SS) and K175. A Mg(2+)-binding site is contributed by D200.

It belongs to the HAD-like hydrolase superfamily. MasA/MtnC family. In terms of assembly, monomer. Requires Mg(2+) as cofactor.

Its subcellular location is the cytoplasm. The protein localises to the nucleus. The catalysed reaction is 5-methylsulfanyl-2,3-dioxopentyl phosphate + H2O = 1,2-dihydroxy-5-(methylsulfanyl)pent-1-en-3-one + phosphate. Its pathway is amino-acid biosynthesis; L-methionine biosynthesis via salvage pathway; L-methionine from S-methyl-5-thio-alpha-D-ribose 1-phosphate: step 3/6. The protein operates within amino-acid biosynthesis; L-methionine biosynthesis via salvage pathway; L-methionine from S-methyl-5-thio-alpha-D-ribose 1-phosphate: step 4/6. Functionally, bifunctional enzyme that catalyzes the enolization of 2,3-diketo-5-methylthiopentyl-1-phosphate (DK-MTP-1-P) into the intermediate 2-hydroxy-3-keto-5-methylthiopentenyl-1-phosphate (HK-MTPenyl-1-P), which is then dephosphorylated to form the acireductone 1,2-dihydroxy-3-keto-5-methylthiopentene (DHK-MTPene). In Drosophila virilis (Fruit fly), this protein is Enolase-phosphatase E1.